The primary structure comprises 195 residues: HTH-type transcriptional regulator BetI (195 aa).

The HTH tetR-type domain occupies 8-68; sequence SIRRRQLIDA…ATMRDITSQL (61 aa). The segment at residues 31–50 is a DNA-binding region (H-T-H motif); that stretch reads TIAQIARRAGVSTGIISHYF.

The protein operates within amine and polyamine biosynthesis; betaine biosynthesis via choline pathway [regulation]. Repressor involved in the biosynthesis of the osmoprotectant glycine betaine. It represses transcription of the choline transporter BetT and the genes of BetAB involved in the synthesis of glycine betaine. The polypeptide is HTH-type transcriptional regulator BetI (Escherichia coli O17:K52:H18 (strain UMN026 / ExPEC)).